We begin with the raw amino-acid sequence, 646 residues long: ATP-dependent rRNA helicase SPB4 (646 aa).

The Q motif motif lies at 15–43 (WGALTPSLAPWILDYLSSMGFEQPTPVQK). One can recognise a Helicase ATP-binding domain in the interval 46–247 (FDIFRGNKDV…TVGLLYPHKI (202 aa)). 59–66 (AVTGSGKT) serves as a coordination point for ATP. Residues 195 to 198 (DEAD) carry the DEAD box motif. Residues 284–434 (ALCQLLERLE…PLAKPPVSVT (151 aa)) form the Helicase C-terminal domain. Composition is skewed to basic and acidic residues over residues 539–548 (KKEKAAREAQ) and 566–581 (NEAWSGKHEHEDVKAA). The tract at residues 539–646 (KKEKAAREAQ…GGDEFEGFDD (108 aa)) is disordered. Positions 572–623 (KHEHEDVKAARREKKRRKREAQRLGDMTEPEREEQRKLDEMIAEVRRRNAEA) form a coiled coil. Residues 582-591 (RREKKRRKRE) are compositionally biased toward basic residues. The segment covering 600-621 (EPEREEQRKLDEMIAEVRRRNA) has biased composition (basic and acidic residues). Residues 622–631 (EAPTPAAQAA) are compositionally biased toward low complexity.

The protein belongs to the DEAD box helicase family. DDX55/SPB4 subfamily. Component of pre-60S ribosomal complexes.

It localises to the nucleus. It is found in the nucleolus. It carries out the reaction ATP + H2O = ADP + phosphate + H(+). Functionally, ATP-binding RNA helicase involved in the biogenesis of 60S ribosomal subunits. Binds 90S pre-ribosomal particles and dissociates from pre-60S ribosomal particles after processing of 27SB pre-rRNA. Required for the normal formation of 18S rRNA through the processing of pre-rRNAs at sites A0, A1 and A2, and the normal formation of 25S and 5.8S rRNAs through the processing of pre-rRNAs at sites C1 and C2. The protein is ATP-dependent rRNA helicase SPB4 of Chaetomium globosum (strain ATCC 6205 / CBS 148.51 / DSM 1962 / NBRC 6347 / NRRL 1970) (Soil fungus).